The chain runs to 1157 residues: Probable ATP-dependent RNA helicase DHX37 (1157 aa).

Residues 1 to 10 are compositionally biased toward basic residues; the sequence is MGKLRRRYNI. 2 disordered regions span residues 1–77 and 116–225; these read MGKL…KKEK and TSKL…AAPP. The span at 21-30 shows a compositional bias: pro residues; sequence SKGPPEPPPV. Acidic residues predominate over residues 159 to 184; the sequence is AEEEEEEEEESESELEEESELDEDPA. Pro residues-rich tracts occupy residues 198 to 208 and 216 to 225; these read PLPPAPAPSSQ and VPPPPAAAPP. The 168-residue stretch at 262–429 folds into the Helicase ATP-binding domain; sequence MEAVAEHPIV…PRLFAKPPPV (168 aa). 275–282 is a binding site for ATP; that stretch reads GETGSGKT. The DEAH box signature appears at 372-375; the sequence is DEAH. The Helicase C-terminal domain maps to 459 to 716; the sequence is KVCKIHRMLP…DLILQMKALN (258 aa). 2 disordered regions span residues 494 to 523 and 542 to 584; these read PPSR…SRAR and VLPA…QPDA. The segment covering 499 to 515 has biased composition (basic and acidic residues); that stretch reads RPQEKDDDQKDSVEEMR. The span at 547 to 571 shows a compositional bias: acidic residues; the sequence is EGDEDREAEVDEEEGALDSDLDLDL.

This sequence belongs to the DEAD box helicase family. DEAH subfamily. As to quaternary structure, part of the small subunit (SSU) processome, composed of more than 70 proteins and the RNA chaperone small nucleolar RNA (snoRNA) U3. Interacts with UTP14A. Expressed in the fallopian tube, ovary, uterus and testis. Also expressed in the brain.

The protein resides in the nucleus. It is found in the nucleolus. It localises to the cytoplasm. The protein localises to the nucleus membrane. The enzyme catalyses ATP + H2O = ADP + phosphate + H(+). Functionally, ATP-binding RNA helicase that plays a role in maturation of the small ribosomal subunit in ribosome biogenesis. Required for the release of the U3 snoRNP from pre-ribosomal particles. Part of the small subunit (SSU) processome, first precursor of the small eukaryotic ribosomal subunit. During the assembly of the SSU processome in the nucleolus, many ribosome biogenesis factors, an RNA chaperone and ribosomal proteins associate with the nascent pre-rRNA and work in concert to generate RNA folding, modifications, rearrangements and cleavage as well as targeted degradation of pre-ribosomal RNA by the RNA exosome. Plays a role in early testis development. Probably also plays a role in brain development. This chain is Probable ATP-dependent RNA helicase DHX37, found in Homo sapiens (Human).